The chain runs to 303 residues: Polyisoprenyl-teichoic acid--peptidoglycan teichoic acid transferase TagU (303 aa).

The Cytoplasmic portion of the chain corresponds to 1–4; sequence MKKK. Residues 5–25 form a helical; Signal-anchor for type II membrane protein membrane-spanning segment; that stretch reads ILFWVLGILGVLIIGGGIYAY. The Extracellular portion of the chain corresponds to 26–303; the sequence is NVYSSVSNTL…KLRTHLEVTK (278 aa).

It belongs to the LytR/CpsA/Psr (LCP) family.

Its subcellular location is the cell membrane. It functions in the pathway cell wall biogenesis. Its function is as follows. May catalyze the final step in cell wall teichoic acid biosynthesis, the transfer of the anionic cell wall polymers (APs) from their lipid-linked precursor to the cell wall peptidoglycan (PG). The polypeptide is Polyisoprenyl-teichoic acid--peptidoglycan teichoic acid transferase TagU (Bacillus anthracis (strain A0248)).